The sequence spans 266 residues: Large ribosomal subunit protein eL8 (266 aa).

Residues K11, K20, and K21 each participate in a glycyl lysine isopeptide (Lys-Gly) (interchain with G-Cter in SUMO2) cross-link. An N6-acetyllysine modification is found at K34. K48 is covalently cross-linked (Glycyl lysine isopeptide (Lys-Gly) (interchain with G-Cter in SUMO2)). At K97 the chain carries N6-acetyllysine; alternate. A Glycyl lysine isopeptide (Lys-Gly) (interchain with G-Cter in SUMO2); alternate cross-link involves residue K97. K125 is covalently cross-linked (Glycyl lysine isopeptide (Lys-Gly) (interchain with G-Cter in SUMO2)). K217 is modified (N6-acetyllysine). K245 is covalently cross-linked (Glycyl lysine isopeptide (Lys-Gly) (interchain with G-Cter in SUMO2)).

It belongs to the eukaryotic ribosomal protein eL8 family. Component of the large ribosomal subunit. Interacts with CRY1. Interacts with DICER1, AGO2, TARBP2, MOV10 and EIF6; they form a large RNA-induced silencing complex (RISC).

The protein resides in the cytoplasm. Functionally, component of the large ribosomal subunit. The ribosome is a large ribonucleoprotein complex responsible for the synthesis of proteins in the cell. In Bos taurus (Bovine), this protein is Large ribosomal subunit protein eL8 (RPL7A).